The chain runs to 60 residues: Alpha-conotoxin-like 289 (60 aa).

A signal peptide spans 1-16; sequence MFTVFLLVVLATTVVS. Positions 17–42 are excised as a propeptide; it reads FTSDRAFRGRNAAAKASGLVGLTDKR. Pyrrolidone carboxylic acid is present on Gln-43. 2 disulfides stabilise this stretch: Cys-45–Cys-51 and Cys-46–Cys-59. The interval 47–49 is ser-Xaa-Pro motif, crucial for potent interaction with nAChR; the sequence is SYP. Cys-59 bears the Cysteine amide mark.

Belongs to the conotoxin A superfamily. In terms of tissue distribution, expressed by the venom duct.

It is found in the secreted. In terms of biological role, alpha-conotoxins act on postsynaptic membranes, they bind to the nicotinic acetylcholine receptors (nAChR) and thus inhibit them. This Conus ammiralis (Admiral cone) protein is Alpha-conotoxin-like 289.